The chain runs to 401 residues: UDP-GlcNAc:betaGal beta-1,3-N-acetylglucosaminyltransferase 9 (401 aa).

Topologically, residues 1–10 (MRRRLRLRRE) are cytoplasmic. The chain crosses the membrane as a helical; Signal-anchor for type II membrane protein span at residues 11-31 (ALLTLLLGATLGLLLYAQQEG). Residues 32-401 (AAPTTSAPRA…VPAGPFQWGP (370 aa)) lie on the Lumenal side of the membrane. The tract at residues 33 to 85 (APTTSAPRAQGRAAPGPTPGLRVFQAPDTGAAPPAYEGDTPEPPTPTGPFDFG) is disordered. The span at 38–47 (APRAQGRAAP) shows a compositional bias: low complexity.

This sequence belongs to the glycosyltransferase 31 family.

The protein localises to the golgi apparatus membrane. This chain is UDP-GlcNAc:betaGal beta-1,3-N-acetylglucosaminyltransferase 9, found in Bos taurus (Bovine).